A 90-amino-acid chain; its full sequence is Defensin-like protein 293 (90 aa).

The N-terminal stretch at 1-26 (MTSRAKSLFIFFFLISCTFMLLETDA) is a signal peptide. Disulfide bonds link Cys63-Cys83, Cys69-Cys88, and Cys75-Cys90.

This sequence belongs to the DEFL family.

The protein localises to the secreted. The sequence is that of Defensin-like protein 293 from Arabidopsis thaliana (Mouse-ear cress).